Here is a 336-residue protein sequence, read N- to C-terminus: N-acetyl-gamma-glutamyl-phosphate reductase (336 aa).

The active site involves Cys-143.

Belongs to the NAGSA dehydrogenase family. Type 1 subfamily.

The protein localises to the cytoplasm. It carries out the reaction N-acetyl-L-glutamate 5-semialdehyde + phosphate + NADP(+) = N-acetyl-L-glutamyl 5-phosphate + NADPH + H(+). It functions in the pathway amino-acid biosynthesis; L-arginine biosynthesis; N(2)-acetyl-L-ornithine from L-glutamate: step 3/4. Functionally, catalyzes the NADPH-dependent reduction of N-acetyl-5-glutamyl phosphate to yield N-acetyl-L-glutamate 5-semialdehyde. This chain is N-acetyl-gamma-glutamyl-phosphate reductase, found in Dictyoglomus thermophilum (strain ATCC 35947 / DSM 3960 / H-6-12).